The primary structure comprises 146 residues: 3-hydroxyacyl-[acyl-carrier-protein] dehydratase FabZ (146 aa).

Residue His-47 is part of the active site.

The protein belongs to the thioester dehydratase family. FabZ subfamily.

It is found in the cytoplasm. The enzyme catalyses a (3R)-hydroxyacyl-[ACP] = a (2E)-enoyl-[ACP] + H2O. In terms of biological role, involved in unsaturated fatty acids biosynthesis. Catalyzes the dehydration of short chain beta-hydroxyacyl-ACPs and long chain saturated and unsaturated beta-hydroxyacyl-ACPs. The polypeptide is 3-hydroxyacyl-[acyl-carrier-protein] dehydratase FabZ (Methylococcus capsulatus (strain ATCC 33009 / NCIMB 11132 / Bath)).